The sequence spans 663 residues: Probable serine/threonine-protein kinase DDB_G0283301 (663 aa).

A Protein kinase domain is found at 312–586 (IERRNELGRG…EECVERLITL (275 aa)). ATP-binding positions include 318–326 (LGRGGNGTV) and Lys348. The active-site Proton acceptor is the Asp440.

This sequence belongs to the protein kinase superfamily. Ser/Thr protein kinase family.

It catalyses the reaction L-seryl-[protein] + ATP = O-phospho-L-seryl-[protein] + ADP + H(+). The catalysed reaction is L-threonyl-[protein] + ATP = O-phospho-L-threonyl-[protein] + ADP + H(+). The sequence is that of Probable serine/threonine-protein kinase DDB_G0283301 from Dictyostelium discoideum (Social amoeba).